The sequence spans 462 residues: NAD(P) transhydrogenase subunit beta (462 aa).

Residues 1 to 3 are Periplasmic-facing; sequence MSG. Residues 4–24 traverse the membrane as a helical segment; it reads GLVTAAYIVAAILFIFSLAGL. Over 25–45 the chain is Cytoplasmic; the sequence is SKHETSRQGNNFGIAGMAIAL. Residues 46 to 66 form a helical membrane-spanning segment; it reads IATIFGPDTGNVGWILLAMVI. Topologically, residues 67-82 are periplasmic; it reads GGAIGIRLAKKVEMTE. Residues 83-103 form a helical membrane-spanning segment; it reads MPELVAILHSFVGLAAVLVGF. Residues 104 to 115 lie on the Cytoplasmic side of the membrane; it reads NSYLHHDAGMAP. Residues 116-136 traverse the membrane as a helical segment; that stretch reads ILVNIHLTEVFLGIFIGAVTF. Over 137–164 the chain is Periplasmic; it reads TGSVVAFGKLCGKISSKPLMLPNRHKMN. The chain crosses the membrane as a helical span at residues 165-185; the sequence is LAALVVSFLLLIVFVRTDSVG. Topologically, residues 186-188 are cytoplasmic; it reads LQV. A helical transmembrane segment spans residues 189-209; that stretch reads LALLIMTAIALVFGWHLVASI. At 210 to 215 the chain is on the periplasmic side; sequence GGADMP. Residues 216–236 form a helical membrane-spanning segment; it reads VVVSMLNSYSGWAAAAAGFML. Topologically, residues 237 to 239 are cytoplasmic; that stretch reads SND. Residues 240 to 260 form a helical membrane-spanning segment; it reads LLIVTGALVGSSGAILSYIMC. Residues 261–308 lie on the Periplasmic side of the membrane; it reads KAMNRSFISVIAGGFGTDGSSTGDDQEVGEHREITAEETAELLKNSHS. Residues 309–329 form a helical membrane-spanning segment; sequence VIITPGYGMAVAQAQYPVAEI. Residues 330 to 462 lie on the Cytoplasmic side of the membrane; that stretch reads TEKLRARGIN…ASVDAILKAL (133 aa).

This sequence belongs to the PNT beta subunit family. Heterodimer of an alpha and a beta chain.

Its subcellular location is the cell inner membrane. It carries out the reaction NAD(+) + NADPH + H(+)(in) = NADH + NADP(+) + H(+)(out). The transhydrogenation between NADH and NADP is coupled to respiration and ATP hydrolysis and functions as a proton pump across the membrane. In Escherichia coli O157:H7, this protein is NAD(P) transhydrogenase subunit beta (pntB).